The sequence spans 459 residues: Ribosomal protein uS12 methylthiotransferase RimO (459 aa).

The interval 1-28 (MSTNPPDLRPDLAPKARLTQPDRPGQPT) is disordered. The MTTase N-terminal domain maps to 27–137 (PTIGMVSLGC…VLDAVHAAVP (111 aa)). C36, C72, C101, C168, C172, and C175 together coordinate [4Fe-4S] cluster. The Radical SAM core domain occupies 154 to 387 (LTPRHFSYLK…MAKSQDISEA (234 aa)). A TRAM domain is found at 390 to 457 (AAKVAQRLEV…EYDLWGRLAP (68 aa)).

The protein belongs to the methylthiotransferase family. RimO subfamily. [4Fe-4S] cluster is required as a cofactor.

It is found in the cytoplasm. It catalyses the reaction L-aspartate(89)-[ribosomal protein uS12]-hydrogen + (sulfur carrier)-SH + AH2 + 2 S-adenosyl-L-methionine = 3-methylsulfanyl-L-aspartate(89)-[ribosomal protein uS12]-hydrogen + (sulfur carrier)-H + 5'-deoxyadenosine + L-methionine + A + S-adenosyl-L-homocysteine + 2 H(+). Its function is as follows. Catalyzes the methylthiolation of an aspartic acid residue of ribosomal protein uS12. This Roseobacter denitrificans (strain ATCC 33942 / OCh 114) (Erythrobacter sp. (strain OCh 114)) protein is Ribosomal protein uS12 methylthiotransferase RimO.